Here is a 336-residue protein sequence, read N- to C-terminus: 4-hydroxy-3-methylbut-2-enyl diphosphate reductase (336 aa).

C37 contacts [4Fe-4S] cluster. Positions 66 and 99 each coordinate (2E)-4-hydroxy-3-methylbut-2-enyl diphosphate. Residues H66 and H99 each coordinate dimethylallyl diphosphate. H66 and H99 together coordinate isopentenyl diphosphate. Residue C121 coordinates [4Fe-4S] cluster. H149 contacts (2E)-4-hydroxy-3-methylbut-2-enyl diphosphate. Residue H149 participates in dimethylallyl diphosphate binding. H149 contributes to the isopentenyl diphosphate binding site. E151 serves as the catalytic Proton donor. T189 contacts (2E)-4-hydroxy-3-methylbut-2-enyl diphosphate. [4Fe-4S] cluster is bound at residue C219. The (2E)-4-hydroxy-3-methylbut-2-enyl diphosphate site is built by S247, S248, N249, and S292. The dimethylallyl diphosphate site is built by S247, S248, N249, and S292. Isopentenyl diphosphate is bound by residues S247, S248, N249, and S292.

Belongs to the IspH family. It depends on [4Fe-4S] cluster as a cofactor.

The enzyme catalyses isopentenyl diphosphate + 2 oxidized [2Fe-2S]-[ferredoxin] + H2O = (2E)-4-hydroxy-3-methylbut-2-enyl diphosphate + 2 reduced [2Fe-2S]-[ferredoxin] + 2 H(+). It carries out the reaction dimethylallyl diphosphate + 2 oxidized [2Fe-2S]-[ferredoxin] + H2O = (2E)-4-hydroxy-3-methylbut-2-enyl diphosphate + 2 reduced [2Fe-2S]-[ferredoxin] + 2 H(+). It functions in the pathway isoprenoid biosynthesis; dimethylallyl diphosphate biosynthesis; dimethylallyl diphosphate from (2E)-4-hydroxy-3-methylbutenyl diphosphate: step 1/1. It participates in isoprenoid biosynthesis; isopentenyl diphosphate biosynthesis via DXP pathway; isopentenyl diphosphate from 1-deoxy-D-xylulose 5-phosphate: step 6/6. In terms of biological role, catalyzes the conversion of 1-hydroxy-2-methyl-2-(E)-butenyl 4-diphosphate (HMBPP) into a mixture of isopentenyl diphosphate (IPP) and dimethylallyl diphosphate (DMAPP). Acts in the terminal step of the DOXP/MEP pathway for isoprenoid precursor biosynthesis. The chain is 4-hydroxy-3-methylbut-2-enyl diphosphate reductase from Rhodococcus opacus (strain B4).